Reading from the N-terminus, the 343-residue chain is Ribosomal RNA small subunit methyltransferase C (343 aa).

The protein belongs to the methyltransferase superfamily. RsmC family. As to quaternary structure, monomer.

The protein localises to the cytoplasm. It catalyses the reaction guanosine(1207) in 16S rRNA + S-adenosyl-L-methionine = N(2)-methylguanosine(1207) in 16S rRNA + S-adenosyl-L-homocysteine + H(+). Specifically methylates the guanine in position 1207 of 16S rRNA in the 30S particle. This Escherichia coli O8 (strain IAI1) protein is Ribosomal RNA small subunit methyltransferase C.